We begin with the raw amino-acid sequence, 104 residues long: Large ribosomal subunit protein bL21 (104 aa).

It belongs to the bacterial ribosomal protein bL21 family. In terms of assembly, part of the 50S ribosomal subunit. Contacts protein L20.

Functionally, this protein binds to 23S rRNA in the presence of protein L20. The protein is Large ribosomal subunit protein bL21 of Granulibacter bethesdensis (strain ATCC BAA-1260 / CGDNIH1).